A 1153-amino-acid polypeptide reads, in one-letter code: Otoancorin (1153 aa).

The first 22 residues, M1–S22, serve as a signal peptide directing secretion. An N-linked (GlcNAc...) asparagine glycan is attached at N156. N-linked (GlcNAc...) (complex) asparagine glycosylation occurs at N211. Residues N244, N289, N321, N394, N398, N460, N544, N812, N911, and N974 are each glycosylated (N-linked (GlcNAc...) asparagine). The disordered stretch occupies residues H1109–S1128. Residue A1130 is the site of GPI-anchor amidated alanine attachment. Residues G1131 to W1153 constitute a propeptide, removed in mature form.

The protein belongs to the stereocilin family.

It is found in the apical cell membrane. It localises to the secreted. The protein resides in the extracellular space. Its subcellular location is the extracellular matrix. Functionally, may act as an adhesion molecule. The polypeptide is Otoancorin (OTOA) (Homo sapiens (Human)).